A 311-amino-acid polypeptide reads, in one-letter code: Phospholipid phosphatase 3 (311 aa).

At 1-33 (MQNYKYDKAIVPESKNGGSPALNNNPRRSGSKR) the chain is on the cytoplasmic side. Phosphoserine is present on S19. The chain crosses the membrane as a helical span at residues 34 to 54 (VLLICLDLFCLFMAGLPFLII). Over 55–85 (ETSTIKPYHRGFYCNDESIKYPLKTGETIND) the chain is Extracellular. Residues 86–106 (AVLCAVGIVIAILAIITGEFY) traverse the membrane as a helical segment. At 107 to 122 (RIYYLKKSRSTIQNPY) the chain is on the cytoplasmic side. The Dityrosine basolateral targeting motif signature appears at 109 to 110 (YY). Residues 123–143 (VAALYKQVGCFLFGCAISQSF) traverse the membrane as a helical segment. Topologically, residues 144 to 193 (TDIAKVSIGRLRPHFLSVCNPDFSQINCSEGYIQNYRCRGDDSKVQEARK) are extracellular. The tract at residues 148-156 (KVSIGRLRP) is phosphatase sequence motif I. N-linked (GlcNAc...) asparagine glycosylation is present at N170. An Integrin-binding motif motif is present at residues 182–184 (RGD). Residues 194 to 214 (SFFSGHASFSMYTMLYLVLYL) traverse the membrane as a helical segment. The segment at 196-199 (FSGH) is phosphatase sequence motif II. H199 functions as the Proton donors in the catalytic mechanism. The Cytoplasmic portion of the chain corresponds to 215 to 225 (QARFTWRGARL). Residues 226-243 (LRPLLQFTLIMMAFYTGL) form a helical membrane-spanning segment. The tract at residues 244-255 (SRVSDHKHHPSD) is phosphatase sequence motif III. Topologically, residues 244–257 (SRVSDHKHHPSDVL) are extracellular. Catalysis depends on H251, which acts as the Nucleophile. A helical transmembrane segment spans residues 258-278 (AGFAQGALVACCIVFFVSDLF). A mediates interaction with CTNND1 region spans residues 275 to 311 (SDLFKTKTTLSLPAPAIRKEILSPVDIIDRNNHHNMM). At 279 to 311 (KTKTTLSLPAPAIRKEILSPVDIIDRNNHHNMM) the chain is on the cytoplasmic side.

It belongs to the PA-phosphatase related phosphoesterase family. Forms functional homodimers and homooligomers that are not required for substrate recognition and catalytic activity. Can also form heterooligomers with other PLPP2 and PLPP3. Interacts with CTNND1; negatively regulates the PLPP3-mediated stabilization of beta-catenin/CTNNB1. Post-translationally, N-glycosylated. Contains high-mannose oligosaccharides. In terms of tissue distribution, ubiquitously expressed. Highly expressed in heart and placenta.

It localises to the cell membrane. The protein resides in the basolateral cell membrane. Its subcellular location is the endoplasmic reticulum membrane. The protein localises to the endoplasmic reticulum-Golgi intermediate compartment membrane. It is found in the golgi apparatus membrane. It localises to the golgi apparatus. The protein resides in the trans-Golgi network membrane. Its subcellular location is the membrane raft. The enzyme catalyses a 1,2-diacyl-sn-glycero-3-phosphate + H2O = a 1,2-diacyl-sn-glycerol + phosphate. It catalyses the reaction 1,2-dihexadecanoyl-sn-glycero-3-phosphate + H2O = 1,2-dihexadecanoyl-sn-glycerol + phosphate. It carries out the reaction 1,2-di-(9Z-octadecenoyl)-sn-glycero-3-phosphate + H2O = 1,2-di-(9Z-octadecenoyl)-sn-glycerol + phosphate. The catalysed reaction is a monoacyl-sn-glycero-3-phosphate + H2O = a monoacylglycerol + phosphate. The enzyme catalyses (9Z)-octadecenoyl-sn-glycero-3-phosphate + H2O = (9Z-octadecenoyl)-glycerol + phosphate. It catalyses the reaction sphing-4-enine 1-phosphate + H2O = sphing-4-enine + phosphate. It carries out the reaction an N-acylsphing-4-enine 1-phosphate + H2O = an N-acylsphing-4-enine + phosphate. The catalysed reaction is N-(octanoyl)-sphing-4-enine-1-phosphate + H2O = N-octanoylsphing-4-enine + phosphate. The enzyme catalyses N-(9Z-octadecenoyl)-ethanolamine phosphate + H2O = N-(9Z-octadecenoyl) ethanolamine + phosphate. The protein operates within lipid metabolism; phospholipid metabolism. Magnesium-independent phospholipid phosphatase. Insensitive to N-ethylmaleimide. Inhibited by sphingosine, zinc ions and modestly by propanolol. In terms of biological role, magnesium-independent phospholipid phosphatase of the plasma membrane that catalyzes the dephosphorylation of a variety of glycerolipid and sphingolipid phosphate esters including phosphatidate/PA, lysophosphatidate/LPA, diacylglycerol pyrophosphate/DGPP, sphingosine 1-phosphate/S1P and ceramide 1-phosphate/C1P. Also acts on N-oleoyl ethanolamine phosphate/N-(9Z-octadecenoyl)-ethanolamine phosphate, a potential physiological compound. Has both an extracellular and an intracellular phosphatase activity, allowing the hydrolysis and the cellular uptake of these bioactive lipid mediators from the milieu, regulating signal transduction in different cellular processes. Through the dephosphorylation of extracellular sphingosine-1-phosphate and the regulation of its extra- and intracellular availability, plays a role in vascular homeostasis, regulating endothelial cell migration, adhesion, survival, proliferation and the production of pro-inflammatory cytokines. By maintaining the appropriate levels of this lipid in the cerebellum, also ensure its proper development and function. Through its intracellular lipid phosphatase activity may act in early compartments of the secretory pathway, regulating the formation of Golgi to endoplasmic reticulum retrograde transport carriers. Functionally, independently of this phosphatase activity may also function in the Wnt signaling pathway and the stabilization of beta-catenin/CTNNB1, thereby regulating cell proliferation, migration and differentiation in angiogenesis or yet in tumor growth. Also plays a role in integrin-mediated cell-cell adhesion in angiogenesis. This Homo sapiens (Human) protein is Phospholipid phosphatase 3.